A 568-amino-acid chain; its full sequence is Phosphoprotein (568 aa).

2 disordered regions span residues 1–23 (MDQDAFILKEDSEVEREAPGGRE) and 38–320 (SEPT…GIGE). Residues 7-20 (ILKEDSEVEREAPG) are compositionally biased toward basic and acidic residues. Residues 33-41 (DAVLSSEPT) form an N0 binding region. A compositionally biased stretch (polar residues) spans 50–59 (LHNTINTPQG). Position 68 is a phosphoserine; by host (serine 68). The span at 83–101 (RSGEESRVSGRTSKPEAEA) shows a compositional bias: basic and acidic residues. Serine 125 is subject to Phosphoserine; by host. The segment covering 150-168 (GIEDENREMAAHPDKRGED) has biased composition (basic and acidic residues). Over residues 191–206 (ASNNGRSMEPGSSHSA) the composition is skewed to polar residues. Serine 192, serine 249, serine 257, and serine 260 each carry phosphoserine; by host. A multimerization region spans residues 344 to 411 (FESSRDASYV…SFRDTYKRFS (68 aa)). Residues 364–429 (YAEMTFNVCG…LLMSNLSTLH (66 aa)) are a coiled coil. The tract at residues 412 to 445 (EYQKEQNSLLMSNLSTLHIITDRGGKTDNTDSLT) is l protein binding. Residues serine 447 and serine 449 each carry the phosphoserine; by host modification. Residues 479–568 (DLIREDEFRD…VEEDIESLTN (90 aa)) form an interaction with the nucleocapsid (N-RNA) region. Residues 496-516 (QERDTEPRASNASRLLPSKEK) form a disordered region.

Belongs to the respirovirus P protein family. Homotetramer. Interacts (via multimerization domain) with polymerase L; this interaction forms the polymerase complex. Interacts (via N-terminus) with N0; this interaction allows P to chaperon N0 before encapsidation and form the N-P complex. Interacts (via C-terminus) with N-RNA template; this interaction positions the polymerase on the template. Post-translationally, phosphorylated by PKC/PRKCZ, and other unknown kinases. Phosphorylation is necessary for viral transcription and replication. The N-terminus contains the majority of phosphorylated sites. Ser-249 is the major site of phosphorylation, but is not necessary for most functions.

Functionally, essential cofactor of the RNA polymerase L that plays a central role in the transcription and replication by forming the polymerase complex with RNA polymerase L and recruiting L to the genomic N-RNA template for RNA synthesis. Also plays a central role in the encapsidation of nascent RNA chains by forming the encapsidation complex with the nucleocapsid protein N (N-P complex). Acts as a chaperone for newly synthesized free N protein, so-called N0, allowing encapsidation of nascent RNA chains during replication. The nucleoprotein protein N prevents excessive phosphorylation of P, which leads to down-regulation of viral transcription/ replication. Participates, together with N, in the formation of viral factories (viroplasms), which are large inclusions in the host cytoplasm where replication takes place. Recruits host PI4KB and remodel the host endoplasmic reticulum membrane to form viral replication factories. The polypeptide is Phosphoprotein (P/V/C) (Sendai virus (strain Z) (SeV)).